The sequence spans 100 residues: Large ribosomal subunit protein uL23 (100 aa).

The protein belongs to the universal ribosomal protein uL23 family. In terms of assembly, part of the 50S ribosomal subunit. Contacts protein L29, and trigger factor when it is bound to the ribosome.

In terms of biological role, one of the early assembly proteins it binds 23S rRNA. One of the proteins that surrounds the polypeptide exit tunnel on the outside of the ribosome. Forms the main docking site for trigger factor binding to the ribosome. This Vibrio atlanticus (strain LGP32) (Vibrio splendidus (strain Mel32)) protein is Large ribosomal subunit protein uL23.